The chain runs to 284 residues: Tryptophan 2,3-dioxygenase (284 aa).

Substrate contacts are provided by residues 53 to 57 (FIVQH), Tyr115, and Arg119. His242 serves as a coordination point for heme. Substrate is bound at residue Thr256.

It belongs to the tryptophan 2,3-dioxygenase family. Homotetramer. Heme is required as a cofactor.

It catalyses the reaction L-tryptophan + O2 = N-formyl-L-kynurenine. It functions in the pathway amino-acid degradation; L-tryptophan degradation via kynurenine pathway; L-kynurenine from L-tryptophan: step 1/2. Its function is as follows. Heme-dependent dioxygenase that catalyzes the oxidative cleavage of the L-tryptophan (L-Trp) pyrrole ring and converts L-tryptophan to N-formyl-L-kynurenine. Catalyzes the oxidative cleavage of the indole moiety. The protein is Tryptophan 2,3-dioxygenase of Bordetella pertussis (strain Tohama I / ATCC BAA-589 / NCTC 13251).